Reading from the N-terminus, the 398-residue chain is MLSVTIVLVGLEMARSKVSKRDSKILDILFATTELYLKTGQPVGSKTLKESFCSDLSTATIRNYFAELEAEGFLKKNHTSGGRIPTDLALRHYVDHQEECPEAEISAPIFDKISQLPSESRNIIKDLQKATELLGEILDLPTFFSSPRFENDSVTNIQITQVDKQRAVTILSTEFGQIFTDTLWLPEACDTLSIKRIEKFLQNYIRKLPTNEELSKKEEHLSMSLYNEVVVRYLTRYCNFSEEDLYQTGMSKLLKYEAFKDPEVLALGLSLFENRRQMCELLNIGMHKGRATAFIGKELSDILGTSNPGCSVITIPYYMNRSPLGALGILGPINLPYKEALPLLKLFANKINETLTQSFYKFKLSFRRPLTSNCKLSNEPILRTEYSSIKLLPSKETL.

The protein belongs to the HrcA family.

Its function is as follows. Negative regulator of class I heat shock genes (grpE-dnaK-dnaJ and groELS operons). Prevents heat-shock induction of these operons. The protein is Heat-inducible transcription repressor HrcA of Chlamydia pneumoniae (Chlamydophila pneumoniae).